A 342-amino-acid polypeptide reads, in one-letter code: MADDLEQQPQGWLSSWLPTWRPTSMSQLKNVEARILQCLQNKFLARYVSLPNQNKIWTVTVSPEQKDRTPLVMVHGFGGGVGLWILNMDSLSARRTLHTFDLLGFGRSSRPTFPRDPEGAEDEFVASIETWRETMGIPTMILLGHSLGGFLATSYSIKYPERVKHLILVDPWGFPLRPTDPSEIRAPPTWVKAVASVLGRSNPLAVLRVAGPWGPGLVQRFRPDFKRKFADFFEDDTISEYIYHCNAQNPSGETAFKAMMESFGWARRPMLERIHLIRKDVPITMIYGANTWIDTSTGKKVKMQRPDSYVRDMEIEGASHHVYADQPHIFNAVVEEICNSVD.

Residues 70-323 (PLVMVHGFGG…EIEGASHHVY (254 aa)) form the AB hydrolase-1 domain.

This sequence belongs to the peptidase S33 family. ABHD4/ABHD5 subfamily. Highest levels in the CNS and in testis, intermediate levels in liver and kidney. Hardly detectable in heart.

It carries out the reaction N-hexadecanoyl-1,2-di-(9Z-octadecenoyl)-sn-glycero-3-phosphoethanolamine + H2O = N-hexadecanoyl-1-(9Z-octadecenoyl)-sn-glycero-3-phosphoethanolamine + (9Z)-octadecenoate + H(+). It catalyses the reaction an N-acyl-1,2-diacyl-sn-glycero-3-phosphoethanolamine + H2O = N,1-diacyl-sn-glycero-3-phosphoethanolamine + a fatty acid + H(+). The enzyme catalyses N-hexadecanoyl-1-(9Z-octadecenoyl)-sn-glycero-3-phosphoethanolamine + H2O = N-hexadecanoyl-sn-glycero-3-phosphoethanolamine + (9Z)-octadecenoate + H(+). The catalysed reaction is N-octadecanoyl-1-(9Z-octadecenoyl)-sn-glycero-3-phosphoethanolamine + H2O = N-octadecanoyl-sn-glycero-3-phospho-ethanolamine + (9Z)-octadecenoate + H(+). It carries out the reaction N-eicosanoyl-1-(9Z-octadecenoyl)-sn-glycero-3-phosphoethanolamine + H2O = N-eicosanoyl-sn-glycero-3-phosphoethanolamine + (9Z)-octadecenoate + H(+). It catalyses the reaction N,1-di-(9Z-octadecenoyl)-sn-glycero-3-phosphoethanolamine + H2O = N-(9Z-octadecenoyl)-sn-glycero-3-phosphoethanolamine + (9Z)-octadecenoate + H(+). The enzyme catalyses N-(5Z,8Z,11Z,14Z-eicosatetraenoyl)-1-(9Z-octadecenoyl)-sn-glycero-3-phosphoethanolamine + H2O = N-(5Z,8Z,11Z,14Z-eicosatetraenoyl)-sn-glycero-3-phosphoethanolamine + (9Z)-octadecenoate + H(+). The catalysed reaction is 1-octadecanoyl-2-(9Z-octadecenoyl)-sn-glycero-3-phospho-(N-hexadecanoyl)-serine + H2O = 1-octadecanoyl-2-hydroxy-sn-glycero-3-phospho-(N-hexadecanoyl)-serine + (9Z)-octadecenoate + H(+). It carries out the reaction 1-O-(1Z-octadecenoyl)-2-(9Z-octadecenoyl)-sn-glycero-3-phospho-N-hexadecanoyl-ethanolamine + H2O = 1-O-(1Z-octadecenyl)-sn-glycero-3-phospho-N-hexadecanoyl-ethanolamine + (9Z)-octadecenoate + H(+). It catalyses the reaction N,1-diacyl-sn-glycero-3-phosphoethanolamine + H2O = N-acyl-sn-glycero-3-phosphoethanolamine + a fatty acid + H(+). Its function is as follows. Lysophospholipase selective for N-acyl phosphatidylethanolamine (NAPE). Contributes to the biosynthesis of N-acyl ethanolamines, including the endocannabinoid anandamide by hydrolyzing the sn-1 and sn-2 acyl chains from N-acyl phosphatidylethanolamine (NAPE) generating glycerophospho-N-acyl ethanolamine (GP-NAE), an intermediate for N-acyl ethanolamine biosynthesis. Hydrolyzes substrates bearing saturated, monounsaturated, polyunsaturated N-acyl chains. Shows no significant activity towards other lysophospholipids, including lysophosphatidylcholine, lysophosphatidylethanolamine and lysophosphatidylserine. This is (Lyso)-N-acylphosphatidylethanolamine lipase from Mus musculus (Mouse).